The following is a 183-amino-acid chain: Probable chemoreceptor glutamine deamidase CheD (183 aa).

Belongs to the CheD family.

The enzyme catalyses L-glutaminyl-[protein] + H2O = L-glutamyl-[protein] + NH4(+). Probably deamidates glutamine residues to glutamate on methyl-accepting chemotaxis receptors (MCPs), playing an important role in chemotaxis. This is Probable chemoreceptor glutamine deamidase CheD from Sinorhizobium medicae (strain WSM419) (Ensifer medicae).